The primary structure comprises 225 residues: UPF0758 protein SZO_09140 (225 aa).

The MPN domain occupies 102 to 224 (PVLSSAQVAE…YYSFREKSDL (123 aa)). Residues histidine 173, histidine 175, and aspartate 186 each coordinate Zn(2+). Residues 173–186 (HNHPSGLTKPSAND) carry the JAMM motif motif.

Belongs to the UPF0758 family.

This chain is UPF0758 protein SZO_09140, found in Streptococcus equi subsp. zooepidemicus (strain H70).